Consider the following 242-residue polypeptide: 4-hydroxy-tetrahydrodipicolinate reductase (242 aa).

Residues 79 to 81 and 103 to 106 each bind NAD(+); these read ATT and SANM. Catalysis depends on histidine 135, which acts as the Proton donor/acceptor. A (S)-2,3,4,5-tetrahydrodipicolinate-binding site is contributed by histidine 136. Catalysis depends on lysine 139, which acts as the Proton donor. Residue 145 to 146 participates in (S)-2,3,4,5-tetrahydrodipicolinate binding; the sequence is GT.

This sequence belongs to the DapB family.

It is found in the cytoplasm. It carries out the reaction (S)-2,3,4,5-tetrahydrodipicolinate + NAD(+) + H2O = (2S,4S)-4-hydroxy-2,3,4,5-tetrahydrodipicolinate + NADH + H(+). The catalysed reaction is (S)-2,3,4,5-tetrahydrodipicolinate + NADP(+) + H2O = (2S,4S)-4-hydroxy-2,3,4,5-tetrahydrodipicolinate + NADPH + H(+). It functions in the pathway amino-acid biosynthesis; L-lysine biosynthesis via DAP pathway; (S)-tetrahydrodipicolinate from L-aspartate: step 4/4. In terms of biological role, catalyzes the conversion of 4-hydroxy-tetrahydrodipicolinate (HTPA) to tetrahydrodipicolinate. This is 4-hydroxy-tetrahydrodipicolinate reductase from Staphylococcus carnosus (strain TM300).